Here is a 210-residue protein sequence, read N- to C-terminus: 3-hexulose-6-phosphate synthase (210 aa).

The protein belongs to the HPS/KGPDC family. HPS subfamily.

It carries out the reaction D-ribulose 5-phosphate + formaldehyde = D-arabino-hex-3-ulose 6-phosphate. It functions in the pathway one-carbon metabolism; formaldehyde assimilation via RuMP pathway; D-fructose 6-phosphate from D-ribulose 5-phosphate and formaldehyde: step 1/2. Its function is as follows. Catalyzes the condensation of ribulose 5-phosphate with formaldehyde to form 3-hexulose 6-phosphate. The protein is 3-hexulose-6-phosphate synthase of Staphylococcus epidermidis (strain ATCC 12228 / FDA PCI 1200).